A 385-amino-acid chain; its full sequence is MQACGGGAAGRRAFDSICPNRMLALPGRALLCKPGKPERKFAPPRKFFPGCTGGSPVSVYEDPPDAEPTALPALTTIDLQDLADCSSLLGSDAPPGGDLAASQNHSHQTEADFNLQDFRDTVDDLISDSSSMMSPTLASGDFPFSPCDISPFGPCLSPPLDPRALQSPPLRPPDVPPPEQYWKEVADQNQRALGDALVENNQLHVTLTQKQEEIASLKERNVQLKELASRTRHLASVLDKLMITQSRDCGAAAEPFLLKAKAKRSLEELVSAAGQDCAEVDAILREISERCDEALQSRDPKRPRLLPEPANTDTRPGNLHGAFRGLRTDCSRSALNLSHSELEEGGSFSTRIRSHSTIRTLAFPQGNAFTIRTANGGYKFRWVPS.

The tract at residues 1–130 (MQACGGGAAG…TVDDLISDSS (130 aa)) is necessary and sufficient for its degradation during the cell cycle. The interval 86 to 111 (SSLLGSDAPPGGDLAASQNHSHQTEA) is disordered. The segment at 131-385 (SMMSPTLASG…GGYKFRWVPS (255 aa)) is necessary and sufficient for proper nuclear localization. Positions 173–245 (PDVPPPEQYW…SVLDKLMITQ (73 aa)) are necessary and sufficient for interaction with GMNN and sufficient for homodimerization. Residues 179–227 (EQYWKEVADQNQRALGDALVENNQLHVTLTQKQEEIASLKERNVQLKEL) are a coiled coil. The interval 294–319 (ALQSRDPKRPRLLPEPANTDTRPGNL) is disordered.

The protein belongs to the geminin family. In terms of assembly, heterodimer (via coiled-coil domain) with GMNN (via coiled-coil domain); targets GMNN to the nucleus. Can form homodimers (in vitro, via coiled-coil domain), but these are much less stable than the heterodimer formed with GMNN.

It is found in the nucleus. Transcription regulator specifically required for multiciliate cell differentiation. Acts in a multiprotein complex containing E2F4 and E2F5 that binds and activates genes required for centriole biogenesis. Required for the deuterosome-mediated acentriolar pathway. Plays a role in mitotic cell cycle progression by promoting cell cycle exit. Modulates GMNN activity by reducing its affinity for CDT1. The protein is Multicilin of Homo sapiens (Human).